A 148-amino-acid polypeptide reads, in one-letter code: Short form salivary protein D7S1 (148 aa).

The N-terminal stretch at 1–21 (MKQNVFFLIAYFSLVFCMCNA) is a signal peptide. Intrachain disulfides connect Cys-28–Cys-61, Cys-41–Cys-147, and Cys-103–Cys-119.

This sequence belongs to the PBP/GOBP family. Female salivary gland.

The protein resides in the secreted. Its function is as follows. In contrast to the related D7 salivary proteins that can bind biogenic amines, does not bind serotonin. The polypeptide is Short form salivary protein D7S1 (Aedes aegypti (Yellowfever mosquito)).